The following is a 323-amino-acid chain: Methionyl-tRNA formyltransferase (323 aa).

117 to 120 (SLLP) provides a ligand contact to (6S)-5,6,7,8-tetrahydrofolate.

It belongs to the Fmt family.

It catalyses the reaction L-methionyl-tRNA(fMet) + (6R)-10-formyltetrahydrofolate = N-formyl-L-methionyl-tRNA(fMet) + (6S)-5,6,7,8-tetrahydrofolate + H(+). Its function is as follows. Attaches a formyl group to the free amino group of methionyl-tRNA(fMet). The formyl group appears to play a dual role in the initiator identity of N-formylmethionyl-tRNA by promoting its recognition by IF2 and preventing the misappropriation of this tRNA by the elongation apparatus. This is Methionyl-tRNA formyltransferase from Acidovorax ebreus (strain TPSY) (Diaphorobacter sp. (strain TPSY)).